Reading from the N-terminus, the 498-residue chain is Myotilin (498 aa).

Disordered regions lie at residues 1–46, 64–151, and 202–241; these read MFNY…QPRQ, MSSS…HEIQ, and QDDS…NDQD. At arginine 20 the chain carries Omega-N-methylarginine. The segment covering 29-43 has biased composition (low complexity); that stretch reads SSFSSQTKQSSIIIQ. Residues 77–138 are compositionally biased toward polar residues; sequence AGSNPGQRVT…INAKPSQTAN (62 aa). The tract at residues 79–150 is necessary for interaction with ACTN1; that stretch reads SNPGQRVTTT…PIPRTPDHEI (72 aa). The span at 202–212 shows a compositional bias: low complexity; it reads QDDSGAQDSQQ. Residues 215–493 form a necessary for interaction with FLNC region; sequence SEHARLQVPT…QRLAAQSGLY (279 aa). Residues 215 to 498 are necessary for interaction with ACTA1; it reads SEHARLQVPT…QSGLYESEEL (284 aa). Polar residues predominate over residues 222–235; it reads VPTSQVRSRSTSRG. 2 Ig-like C2-type domains span residues 250-335 and 349-441; these read PRFI…ATFT and PMFI…LDVT.

This sequence belongs to the myotilin/palladin family. Homodimer. Interacts with ACTA1, ACTN1, FLNA, FLNB, FLNC and MYOZ2. Interacts with the C-terminal region of MYOZ1. In terms of tissue distribution, expressed in skeletal muscle (at protein level). Expressed in skeletal muscle, heart, bone marrow and thyroid gland.

The protein resides in the cell membrane. It is found in the sarcolemma. It localises to the cytoplasm. The protein localises to the cytoskeleton. Its subcellular location is the myofibril. The protein resides in the sarcomere. It is found in the z line. Its function is as follows. Component of a complex of multiple actin cross-linking proteins. Involved in the control of myofibril assembly and stability at the Z lines in muscle cells. The polypeptide is Myotilin (MYOT) (Homo sapiens (Human)).